The chain runs to 470 residues: 6-phospho-beta-galactosidase (470 aa).

The D-galactose 6-phosphate site is built by Gln19, His116, Asn159, Glu160, and Asn297. Residue Glu160 is the Proton donor of the active site. The Nucleophile role is filled by Glu375. Ser430, Trp431, Lys437, and Tyr439 together coordinate D-galactose 6-phosphate.

Belongs to the glycosyl hydrolase 1 family.

It catalyses the reaction a 6-phospho-beta-D-galactoside + H2O = D-galactose 6-phosphate + an alcohol. Its pathway is carbohydrate metabolism; lactose degradation; D-galactose 6-phosphate and beta-D-glucose from lactose 6-phosphate: step 1/1. This Staphylococcus aureus (strain USA300) protein is 6-phospho-beta-galactosidase.